A 567-amino-acid chain; its full sequence is Microtubule-associated protein 70-1 (567 aa).

Residues 38–341 (VRVELTRLEN…AARSEAQLKD (304 aa)) are a coiled coil. Residues 220–440 (ILDRMHRQKV…SGMNVSTDSS (221 aa)) are required for targeting to microtubules. 2 disordered regions span residues 425 to 457 (KGHVNGSGMNVSTDSSEDKESNNSDEKANEFTS) and 534 to 567 (LEKEQDNKAKRFGSSSSQLPPGRTLPRSGSARNM). A compositionally biased stretch (basic and acidic residues) spans 440-453 (SEDKESNNSDEKAN). The stretch at 516–545 (KKRRMEVAAMEKEMAALRLEKEQDNKAKRF) forms a coiled coil.

This sequence belongs to the MAP70 family.

It localises to the cytoplasm. It is found in the cytoskeleton. Functionally, plant-specific protein that interact with microtubules. This Oryza sativa subsp. japonica (Rice) protein is Microtubule-associated protein 70-1 (MAP70.1).